The primary structure comprises 367 residues: tRNA N6-adenosine threonylcarbamoyltransferase (367 aa).

Residues H123 and H127 each contribute to the Fe cation site. Residues 145–149 (LVSGG), D178, G191, and N288 contribute to the substrate site. D316 provides a ligand contact to Fe cation.

It belongs to the KAE1 / TsaD family. Fe(2+) serves as cofactor.

It localises to the cytoplasm. The catalysed reaction is L-threonylcarbamoyladenylate + adenosine(37) in tRNA = N(6)-L-threonylcarbamoyladenosine(37) in tRNA + AMP + H(+). Required for the formation of a threonylcarbamoyl group on adenosine at position 37 (t(6)A37) in tRNAs that read codons beginning with adenine. Is involved in the transfer of the threonylcarbamoyl moiety of threonylcarbamoyl-AMP (TC-AMP) to the N6 group of A37, together with TsaE and TsaB. TsaD likely plays a direct catalytic role in this reaction. This Caulobacter vibrioides (strain ATCC 19089 / CIP 103742 / CB 15) (Caulobacter crescentus) protein is tRNA N6-adenosine threonylcarbamoyltransferase.